The sequence spans 223 residues: Large ribosomal subunit protein uL3 (223 aa).

The interval 137–157 is disordered; the sequence is GRASHGNSRSHNVPGSIGMAQ. The residue at position 157 (Gln157) is an N5-methylglutamine.

Belongs to the universal ribosomal protein uL3 family. Part of the 50S ribosomal subunit. Forms a cluster with proteins L14 and L19. Post-translationally, methylated by PrmB.

Its function is as follows. One of the primary rRNA binding proteins, it binds directly near the 3'-end of the 23S rRNA, where it nucleates assembly of the 50S subunit. In Burkholderia pseudomallei (strain 1106a), this protein is Large ribosomal subunit protein uL3.